Reading from the N-terminus, the 101-residue chain is Apolipoprotein C-II (101 aa).

Positions 1 to 22 are cleaved as a signal peptide; that stretch reads MGIRYLLVLVLVLLVLGCEVQG. Residues 66–74 form a lipid binding region; the sequence is TMDEKIREI. Residues 78–101 are lipoprotein lipase cofactor; sequence STAAVSTYAGIFTDQLLSMLKGDQ.

The protein belongs to the apolipoprotein C2 family. Post-translationally, proapolipoprotein C-II is synthesized as a sialic acid containing glycoprotein which is subsequently desialylated prior to its proteolytic processing. In terms of processing, proapolipoprotein C-II, the major form found in plasma undergoes proteolytic cleavage of its N-terminal hexapeptide to generate apolipoprotein C-II, which occurs as the minor form in plasma.

It localises to the secreted. Functionally, component of chylomicrons, very low-density lipoproteins (VLDL), low-density lipoproteins (LDL), and high-density lipoproteins (HDL) in plasma. Plays an important role in lipoprotein metabolism as an activator of lipoprotein lipase. Both proapolipoprotein C-II and apolipoprotein C-II can activate lipoprotein lipase. This Phoca vitulina (Harbor seal) protein is Apolipoprotein C-II (APOC2).